A 488-amino-acid chain; its full sequence is MNSLYIAGSWLAGQGELFESRNPVTQHVLWAGNGATAEQVESAVQAARQAFPAWARRPLEERISVLETFAATLKNRADEIARCIGEETGKPLWESVTEVTSMANKIAISVQSYRERTGEKSGPLGDATAVLRHKPHGVVAVFGPYNFPGHLPNGHIVPALLAGNTVLFKPSELTPKVAELTVQCWIEAGLPAGVLNLLQGARETGIALAANPGIDGLFFTGSSRTGNHLHQQFSGRPDKILALEMGGNNPLVVDEVADVDAAVYTIIQSAFISAGQRCTCARRLLVPEGAWGDALLARLVAVSATIAVGAFDQQPAPFMGSVISLAAAKALMDAQELMLANGAVALLEMTQPQDQAALLTPGIIDVTGVTAREDEELFGPLLQVIRYADFAAAIAEANNTQYGLAAGLLSDSEARYQQFWLESRAGIVNWNKQLTGAASTAPFGGVGASGNHRASAYYAADYCAYPVASLETPSLVVPATLTPGVRLS.

221–226 (GSSRTG) serves as a coordination point for NAD(+). Active-site residues include E244 and C278.

It belongs to the aldehyde dehydrogenase family. AstD subfamily.

It carries out the reaction N-succinyl-L-glutamate 5-semialdehyde + NAD(+) + H2O = N-succinyl-L-glutamate + NADH + 2 H(+). The protein operates within amino-acid degradation; L-arginine degradation via AST pathway; L-glutamate and succinate from L-arginine: step 4/5. In terms of biological role, catalyzes the NAD-dependent reduction of succinylglutamate semialdehyde into succinylglutamate. The chain is N-succinylglutamate 5-semialdehyde dehydrogenase from Pseudomonas fluorescens (strain SBW25).